The chain runs to 100 residues: Urease subunit gamma (100 aa).

Belongs to the urease gamma subunit family. As to quaternary structure, heterotrimer of UreA (gamma), UreB (beta) and UreC (alpha) subunits. Three heterotrimers associate to form the active enzyme.

Its subcellular location is the cytoplasm. It catalyses the reaction urea + 2 H2O + H(+) = hydrogencarbonate + 2 NH4(+). It functions in the pathway nitrogen metabolism; urea degradation; CO(2) and NH(3) from urea (urease route): step 1/1. The polypeptide is Urease subunit gamma (Leptothrix cholodnii (strain ATCC 51168 / LMG 8142 / SP-6) (Leptothrix discophora (strain SP-6))).